The primary structure comprises 316 residues: UDP-N-acetylenolpyruvoylglucosamine reductase (316 aa).

Residues 27–225 enclose the FAD-binding PCMH-type domain; sequence VGGKAERFYR…KTAINALLKK (199 aa). Residue Arg190 is part of the active site. Residue Ser239 is the Proton donor of the active site. Residue Glu309 is part of the active site.

This sequence belongs to the MurB family. FAD is required as a cofactor.

The protein localises to the cytoplasm. The enzyme catalyses UDP-N-acetyl-alpha-D-muramate + NADP(+) = UDP-N-acetyl-3-O-(1-carboxyvinyl)-alpha-D-glucosamine + NADPH + H(+). Its pathway is cell wall biogenesis; peptidoglycan biosynthesis. Functionally, cell wall formation. The polypeptide is UDP-N-acetylenolpyruvoylglucosamine reductase (Coxiella burnetii (strain CbuG_Q212) (Coxiella burnetii (strain Q212))).